Here is a 492-residue protein sequence, read N- to C-terminus: MSDTPRKLSLNKLSLKRDSAPEAPKLEERLHKVLAQAGLGSRRALEQRIADGLIKVNGAVAQTGMSVRSGDKIELDGRSFVASALTESSRVLVYNKPEGEVTTREDPEGRPTVFESLPALKGSRWIAIGRLDINTTGLLLLTTDGELANAMMHPSYEVEREYVVRVRAPEGEEKVPDSMIERLSRGVLLEDGGAKFDEIERIGGTDSHDWFRVVVKEGRNREVRRLWESQGCQVSRLKRTRYGKVSLPRELLRGQSVELAQEKVDALRAELKLEEGAPSALTLQPVIGQRRAAKSTVHVSRDGRSNAYVNGQTSGADEGRELRRFDNLREDRGGRGGRGKPGGFKGGLTVSGEAAAKQSQQRPFKQRGPAKGDRSLPDGNPAAFRSWYVPDGVSTGPSGHRNAGPGGAGTGQPRPYAKKGPGGARPGAGGQGRGAAGGQGQSQGQGQGQRKHPYGHPGNAPSFPSDHANPGFSPYGAARPANESYKRRPPRH.

Residues 1–24 (MSDTPRKLSLNKLSLKRDSAPEAP) form a disordered region. Positions 15–24 (LKRDSAPEAP) are enriched in basic and acidic residues. The region spanning 28–97 (ERLHKVLAQA…SSRVLVYNKP (70 aa)) is the S4 RNA-binding domain. Catalysis depends on D132, which acts as the Nucleophile. The disordered stretch occupies residues 294–492 (KSTVHVSRDG…ESYKRRPPRH (199 aa)). Residues 317-334 (DEGRELRRFDNLREDRGG) show a composition bias toward basic and acidic residues. Gly residues predominate over residues 420–447 (GPGGARPGAGGQGRGAAGGQGQSQGQGQ).

This sequence belongs to the pseudouridine synthase RsuA family.

It carries out the reaction uridine(2605) in 23S rRNA = pseudouridine(2605) in 23S rRNA. Functionally, responsible for synthesis of pseudouridine from uracil-2605 in 23S ribosomal RNA. The polypeptide is Ribosomal large subunit pseudouridine synthase B (rluB) (Xanthomonas campestris pv. campestris (strain ATCC 33913 / DSM 3586 / NCPPB 528 / LMG 568 / P 25)).